Consider the following 288-residue polypeptide: THO complex subunit 4D (288 aa).

The disordered stretch occupies residues 1-55; that stretch reads MSGALNMTLDEIVKRGKTARSGGRGISRGRGRGRGGGGRGAGPARRGPLAVNARP. At serine 2 the chain carries N-acetylserine. Positions 93 to 170 constitute an RRM domain; sequence TRLHVTNLDQ…RPMRLEILGG (78 aa). Positions 201-288 are disordered; that stretch reads QGGGGRGRVR…SYHADAMNTS (88 aa). Residues 232–260 are compositionally biased toward gly residues; sequence QGGGMRGGRGGFRARGRGNGGRGRGGGRG. Over residues 264–281 the composition is skewed to basic and acidic residues; sequence KPVEKSAADLDKDLESYH.

Belongs to the ALYREF family. Interacts with PARP1. Interacts with EIF4A3.

Its subcellular location is the nucleus. It is found in the nucleoplasm. The protein resides in the nucleolus. In terms of biological role, export adapter involved in nuclear export of spliced and unspliced mRNA. Plays a role in disease resistance. Mediates multiple defense responses triggered by NEP1, including stomatal closure, hypersensitive cell death (HCD) and defense-related gene expression. This is THO complex subunit 4D from Arabidopsis thaliana (Mouse-ear cress).